Here is a 668-residue protein sequence, read N- to C-terminus: Bifunctional polymyxin resistance protein ArnA (668 aa).

The formyltransferase ArnAFT stretch occupies residues 1 to 307 (MSNKAVVFAY…ELGLVDGSLL (307 aa)). Histidine 106 (proton donor; for formyltransferase activity) is an active-site residue. (6R)-10-formyltetrahydrofolate contacts are provided by residues arginine 116 and 138-142 (VKRAD). Residues 317–668 (RRTRVLILGV…IADRAKQEAR (352 aa)) form a dehydrogenase ArnADH region. NAD(+)-binding positions include aspartate 350 and 371-372 (DI). UDP-alpha-D-glucuronate-binding positions include alanine 396, tyrosine 401, and 435-436 (TS). Glutamate 437 serves as the catalytic Proton acceptor; for decarboxylase activity. UDP-alpha-D-glucuronate contacts are provided by residues arginine 463, asparagine 494, 528 to 537 (RLFDGGEQKR), and tyrosine 615. The active-site Proton donor; for decarboxylase activity is arginine 621.

The protein in the N-terminal section; belongs to the Fmt family. UDP-L-Ara4N formyltransferase subfamily. This sequence in the C-terminal section; belongs to the NAD(P)-dependent epimerase/dehydratase family. UDP-glucuronic acid decarboxylase subfamily. In terms of assembly, homohexamer, formed by a dimer of trimers.

The catalysed reaction is UDP-alpha-D-glucuronate + NAD(+) = UDP-beta-L-threo-pentopyranos-4-ulose + CO2 + NADH. It catalyses the reaction UDP-4-amino-4-deoxy-beta-L-arabinose + (6R)-10-formyltetrahydrofolate = UDP-4-deoxy-4-formamido-beta-L-arabinose + (6S)-5,6,7,8-tetrahydrofolate + H(+). Its pathway is nucleotide-sugar biosynthesis; UDP-4-deoxy-4-formamido-beta-L-arabinose biosynthesis; UDP-4-deoxy-4-formamido-beta-L-arabinose from UDP-alpha-D-glucuronate: step 1/3. It functions in the pathway nucleotide-sugar biosynthesis; UDP-4-deoxy-4-formamido-beta-L-arabinose biosynthesis; UDP-4-deoxy-4-formamido-beta-L-arabinose from UDP-alpha-D-glucuronate: step 3/3. It participates in bacterial outer membrane biogenesis; lipopolysaccharide biosynthesis. Its function is as follows. Bifunctional enzyme that catalyzes the oxidative decarboxylation of UDP-glucuronic acid (UDP-GlcUA) to UDP-4-keto-arabinose (UDP-Ara4O) and the addition of a formyl group to UDP-4-amino-4-deoxy-L-arabinose (UDP-L-Ara4N) to form UDP-L-4-formamido-arabinose (UDP-L-Ara4FN). The modified arabinose is attached to lipid A and is required for resistance to polymyxin and cationic antimicrobial peptides. The sequence is that of Bifunctional polymyxin resistance protein ArnA from Pseudomonas fluorescens (strain ATCC BAA-477 / NRRL B-23932 / Pf-5).